The sequence spans 464 residues: Probable acid phosphatase DDB_G0284753 (464 aa).

A disordered region spans residues 1–29 (MFSYFRKSQQKVEENQNGGGGDGRGSGIK). A compositionally biased stretch (gly residues) spans 17-26 (NGGGGDGRGS). Residue histidine 81 is the Nucleophile of the active site. Residues 180 to 202 (SFTDEQEKSPHHSSFLVKPDNEE) form a disordered region. Aspartate 347 acts as the Proton donor in catalysis.

Belongs to the histidine acid phosphatase family.

The catalysed reaction is a phosphate monoester + H2O = an alcohol + phosphate. This chain is Probable acid phosphatase DDB_G0284753, found in Dictyostelium discoideum (Social amoeba).